Reading from the N-terminus, the 484-residue chain is Probable protein disulfide-isomerase ER-60 (484 aa).

The first 14 residues, M1–A14, serve as a signal peptide directing secretion. Thioredoxin domains lie at S15–G125 and F338–T467. Catalysis depends on nucleophile residues C46, C49, C388, and C391. 2 cysteine pairs are disulfide-bonded: C46/C49 and C388/C391. Residues K481–L484 carry the Prevents secretion from ER motif.

Belongs to the protein disulfide isomerase family.

The protein resides in the endoplasmic reticulum lumen. The enzyme catalyses Catalyzes the rearrangement of -S-S- bonds in proteins.. In Schistosoma mansoni (Blood fluke), this protein is Probable protein disulfide-isomerase ER-60.